The sequence spans 2692 residues: Thyroglobulin (2692 aa).

Residues Met-1 to Ala-19 form the signal peptide. Iodotyrosine; alternate is present on Tyr-24. Residue Tyr-24 is modified to Sulfotyrosine; alternate. Thyroxine; alternate is present on Tyr-24. Tyr-24 bears the Triiodothyronine; alternate mark. Thyroglobulin type-1 domains are found at residues Leu-31–Cys-92, Leu-93–Cys-160, and Pro-161–Thr-248. Cystine bridges form between Cys-34-Cys-52, Cys-63-Cys-70, Cys-72-Cys-92, Cys-96-Cys-120, Cys-131-Cys-138, Cys-140-Cys-160, Cys-164-Cys-183, and Cys-194-Cys-235. Position 108 is an iodotyrosine (Tyr-108). Asn-110 is a glycosylation site (N-linked (GlcNAc...) asparagine). The residue at position 149 (Tyr-149) is an Iodotyrosine; alternate. Tyr-149 carries the post-translational modification Diiodotyrosine; alternate. Residue Asn-198 is glycosylated (N-linked (GlcNAc...) asparagine). 2 positions are modified to iodotyrosine: Tyr-234 and Tyr-258. The Thyroglobulin type-1 4 domain occupies Pro-298–Cys-358. Disulfide bonds link Cys-301–Cys-319, Cys-330–Cys-336, Cys-338–Cys-358, Cys-364–Cys-621, Cys-408–Cys-609, Cys-632–Cys-637, Cys-639–Cys-659, Cys-663–Cys-688, and Cys-699–Cys-704. Asn-485, Asn-497, and Asn-546 each carry an N-linked (GlcNAc...) asparagine glycan. Thyroglobulin type-1 domains follow at residues Ser-606 to Cys-659, Pro-660 to Cys-727, and Pro-728 to Cys-923. At Tyr-705 the chain carries Iodotyrosine; alternate. At Tyr-705 the chain carries Thyroxine; alternate. Triiodothyronine; alternate is present on Tyr-705. Tyr-705 carries the diiodotyrosine; alternate modification. 13 disulfides stabilise this stretch: Cys-706–Cys-727, Cys-731–Cys-764, Cys-775–Cys-900, Cys-902–Cys-923, Cys-927–Cys-1033, Cys-1044–Cys-1051, Cys-1053–Cys-1079, Cys-1128–Cys-1147, Cys-1151–Cys-1171, Cys-1183–Cys-1190, Cys-1192–Cys-1212, Cys-1237–Cys-1287, and Cys-1262–Cys-1278. Asn-749 carries N-linked (GlcNAc...) asparagine glycosylation. Iodotyrosine is present on Tyr-786. N-linked (GlcNAc...) asparagine glycosylation is present at Asn-855. Tyr-868 bears the Iodotyrosine; alternate mark. Tyr-868 carries the diiodotyrosine; alternate modification. The residue at position 885 (Tyr-885) is a Diiodotyrosine. Asn-949 carries N-linked (GlcNAc...) asparagine glycosylation. An Iodotyrosine; alternate modification is found at Tyr-994. Residue Tyr-994 is modified to Diiodotyrosine; alternate. Thyroglobulin type-1 domains follow at residues Ser-1021–Cys-1079, Leu-1088–Cys-1147, and Pro-1148–Cys-1212. Asn-1142 carries N-linked (GlcNAc...) asparagine glycosylation. At Tyr-1241 the chain carries Iodotyrosine. Tyr-1241 carries the post-translational modification Thyroxine. Residues Asn-1296 and Asn-1384 are each glycosylated (N-linked (GlcNAc...) asparagine). Intrachain disulfides connect Cys-1372–Cys-1392, Cys-1395–Cys-1406, Cys-1409–Cys-1423, Cys-1426–Cys-1443, Cys-1447–Cys-1456, Cys-1476–Cys-1498, Cys-1535–Cys-1559, Cys-1539–Cys-1545, Cys-1571–Cys-1594, Cys-1656–Cys-1681, Cys-1660–Cys-1666, Cys-1665–Cys-1766, and Cys-1692–Cys-1709. Type II repeat units follow at residues Pro-1389–Gln-1402, Glu-1403–Gly-1419, and Ser-1420–Gly-1436. Tyr-1400 carries the post-translational modification Iodotyrosine; alternate. Tyr-1400 is modified (diiodotyrosine; alternate). One can recognise a Thyroglobulin type-1 11 domain in the interval Val-1444–Cys-1498. The Type IIIA repeat unit spans residues Cys-1535–Phe-1655. Residues Cys-1656–Trp-1823 form a Type IIIB repeat. An N-linked (GlcNAc...) asparagine glycan is attached at Asn-1800. Cystine bridges form between Cys-1824–Cys-1850, Cys-1828–Cys-1835, Cys-1859–Cys-1870, Cys-1927–Cys-1955, Cys-1931–Cys-1937, Cys-1936–Cys-2007, Cys-1966–Cys-1979, Cys-2061–Cys-2085, Cys-2065–Cys-2071, and Cys-2094–Cys-2103. The Type IIIA repeat unit spans residues Cys-1824–Glu-1926. Residues Cys-1927–Arg-2060 form a Type IIIB repeat. Asn-1944 carries an N-linked (GlcNAc...) asparagine glycan. The Type IIIA repeat unit spans residues Cys-2061 to Pro-2118. Iodotyrosine is present on Tyr-2115. A cholinesterase-like (ChEL) region spans residues Asp-2119 to Lys-2692. N-linked (GlcNAc...) asparagine glycosylation is found at Asn-2181 and Asn-2226. At Tyr-2467 the chain carries Thyroxine. Tyr-2500 carries the iodotyrosine; alternate modification. Thyroxine; alternate is present on Tyr-2500. Tyr-2500 bears the Triiodothyronine; alternate mark. Residue Tyr-2500 is modified to Diiodotyrosine; alternate. An iodotyrosine mark is found at Tyr-2514 and Tyr-2544. Cys-2518 and Cys-2642 form a disulfide bridge. Tyr-2624 carries the post-translational modification Diiodotyrosine. The segment covering Glu-2658 to Asp-2671 has biased composition (acidic residues). A disordered region spans residues Glu-2658 to Lys-2692. Tyr-2690 carries the post-translational modification Iodotyrosine; alternate. Residue Tyr-2690 is modified to Thyroxine; alternate. Tyr-2690 is subject to Triiodothyronine; alternate. Residue Tyr-2690 is modified to Diiodotyrosine; alternate.

The protein belongs to the type-B carboxylesterase/lipase family. As to quaternary structure, monomer. Homodimer (via ChEL region); occurs in the endoplasmic reticulum and is required for export to the Golgi apparatus. Homooligomer; disulfide-linked; stored in this form in the thyroid follicle lumen. Iodinated on tyrosine residues by TPO. There are 4 pairs of iodinated tyrosines used for coupling: acceptor Tyr-24 is coupled to donor Tyr-149 or Tyr-234, acceptor Tyr-2500 is coupled to donor Tyr-2467, acceptor Tyr-2690 in monomer 1 is coupled to donor Tyr-2690 in monomer 2 and acceptor Tyr-1241 in monomer 1 is coupled to donor Tyr-108 in monomer 2. Post-translationally, sulfated tyrosines are desulfated during iodination. In terms of processing, undergoes sequential proteolysis by cathepsins to release thyroxine (T4) and triiodothyronine (T3) hormones. In the thyroid follicle lumen, cross-linked TG (storage form) is solubilized by limited proteolysis mediated by cathepsins CTSB and/or CTSL. Partially cleaved TG is further processed by CTSK/cathepsin K and/or CTSL resulting in the release of T4. Following endocytosis, further processing occurs leading to the release of T3 and more T4 hormones. As to expression, expressed in thyroid epithelial cells.

It localises to the secreted. Acts as a substrate for the production of iodinated thyroid hormones thyroxine (T4) and triiodothyronine (T3). The synthesis of T3 and T4 involves iodination of selected tyrosine residues of TG/thyroglobulin followed by their oxidative coupling. Following TG re-internalization and lysosomal-mediated proteolysis, T3 and T4 are released from the polypeptide backbone leading to their secretion into the bloodstream. One dimer produces 7 thyroid hormone molecules. The chain is Thyroglobulin from Sus scrofa (Pig).